Consider the following 240-residue polypeptide: 2,3-bisphosphoglycerate-dependent phosphoglycerate mutase (240 aa).

Substrate contacts are provided by residues 5 to 12 (RHGESVWN), 18 to 19 (TG), Arg57, 84 to 87 (ERHY), Lys95, 111 to 112 (RR), and 180 to 181 (GN). His6 (tele-phosphohistidine intermediate) is an active-site residue. Glu84 serves as the catalytic Proton donor/acceptor.

Belongs to the phosphoglycerate mutase family. BPG-dependent PGAM subfamily. As to quaternary structure, homodimer.

It carries out the reaction (2R)-2-phosphoglycerate = (2R)-3-phosphoglycerate. It participates in carbohydrate degradation; glycolysis; pyruvate from D-glyceraldehyde 3-phosphate: step 3/5. In terms of biological role, catalyzes the interconversion of 2-phosphoglycerate and 3-phosphoglycerate. The protein is 2,3-bisphosphoglycerate-dependent phosphoglycerate mutase of Nitrosococcus oceani (strain ATCC 19707 / BCRC 17464 / JCM 30415 / NCIMB 11848 / C-107).